A 1019-amino-acid polypeptide reads, in one-letter code: Photoactivated adenylate cyclase subunit alpha-like protein 1224-5/1F (1019 aa).

The BLUF 1 domain occupies 55 to 148 (LRRLMYLSAS…GRMYGWWHLK (94 aa)). Residues 204–332 (VVTVIYLVEF…DWINSASRIT (129 aa)) enclose the Guanylate cyclase 1 domain. Positions 467 to 559 (LITLTYISQA…GVYGSPLDMT (93 aa)) constitute a BLUF 2 domain. Residues 615 to 744 (VMLATAISSF…EVRARVLEVE (130 aa)) form the Guanylate cyclase 2 domain. A disordered region spans residues 825 to 863 (NISCRGGNPPAGGIPTSPKVRPPGRTNSVSSYTPDPKQA).

This sequence belongs to the adenylyl cyclase class-4/guanylyl cyclase family. Heterotetramer of two alpha and two beta subunits.

It is found in the cell projection. The protein resides in the cilium. Its subcellular location is the flagellum. This chain is Photoactivated adenylate cyclase subunit alpha-like protein 1224-5/1F, found in Euglena gracilis.